An 821-amino-acid chain; its full sequence is Glycogen phosphorylase (821 aa).

The residue at position 667 (lysine 667) is an N6-(pyridoxal phosphate)lysine.

Belongs to the glycogen phosphorylase family. Pyridoxal 5'-phosphate serves as cofactor.

The enzyme catalyses [(1-&gt;4)-alpha-D-glucosyl](n) + phosphate = [(1-&gt;4)-alpha-D-glucosyl](n-1) + alpha-D-glucose 1-phosphate. Its function is as follows. Phosphorylase is an important allosteric enzyme in carbohydrate metabolism. Enzymes from different sources differ in their regulatory mechanisms and in their natural substrates. However, all known phosphorylases share catalytic and structural properties. This chain is Glycogen phosphorylase (glgP), found in Haemophilus influenzae (strain ATCC 51907 / DSM 11121 / KW20 / Rd).